A 540-amino-acid chain; its full sequence is MLO protein homolog 1 (540 aa).

The Extracellular portion of the chain corresponds to 1–16 (MAGGRSGSRELPETPT). The chain crosses the membrane as a helical span at residues 17 to 37 (WAVAVVCAVLVLVSAAMEHGL). Residues 38-60 (HNLSHWFRRRQKKAMGDALDKIK) are Cytoplasmic-facing. Residues 61 to 81 (AELMLLGFISLLLTVAQAPIS) traverse the membrane as a helical segment. Residues 82–142 (KICIPKSAAN…MSAKSMHQLH (61 aa)) lie on the Extracellular side of the membrane. Residues 143-163 (IFIFVLAVFHVTYCIITMGLG) form a helical membrane-spanning segment. Residues 164-265 (RLKMKKWKKW…IKRSLEDDFK (102 aa)) lie on the Cytoplasmic side of the membrane. The helical transmembrane segment at 266–286 (VVVGISLPLWFVGILVLFLDI) threads the bilayer. His287 is a topological domain (extracellular). The chain crosses the membrane as a helical span at residues 288–308 (GLGTLIWISFVPLIIVLLVGT). Topologically, residues 309 to 347 (KLEMVIMEMAQEIQDRATVIQGAPMVEPSNKYFWFNRPD) are cytoplasmic. Residues 348-368 (WVLFFIHLTLFHNAFQMAHFV) form a helical membrane-spanning segment. Residues 369–383 (WTMATPGLKKCFHEN) are Extracellular-facing. A helical membrane pass occupies residues 384–404 (IWLSIVEVIVGISLQVLCSYI). The Cytoplasmic portion of the chain corresponds to 405 to 540 (TFPLYALVTQ…DSDFSFSAQR (136 aa)). Residues 426–447 (EQTMKALMNWRKKAMEKKKVRD) form a calmodulin-binding region. Residues 468 to 526 (ASPVHLLQDHRARSDDPPSPITVASPPAPEEDMYPVPAAAASRQLLDDPPDRRWMASSS) are disordered. 2 stretches are compositionally biased toward basic and acidic residues: residues 474–483 (LQDHRARSDD) and 512–521 (LLDDPPDRRW).

The protein belongs to the MLO family.

Its subcellular location is the membrane. In terms of biological role, may be involved in modulation of pathogen defense and leaf cell death. Activity seems to be regulated by Ca(2+)-dependent calmodulin binding and seems not to require heterotrimeric G proteins. The sequence is that of MLO protein homolog 1 (MLO1) from Oryza sativa subsp. indica (Rice).